Reading from the N-terminus, the 282-residue chain is Extent of cell elongation protein 1 (282 aa).

The N-terminal stretch at 1 to 18 (MKFSKVASFAFLALSSQA) is a signal peptide. The helical transmembrane segment at 68–92 (ISFAGIVSSIINQLPSIIQIIGNII) threads the bilayer.

The protein localises to the secreted. The protein resides in the host cell membrane. Functionally, secreted protein cleaved by KEX2 in 8 similar peptides (ECE1-I to ECE1-VIII). Stimulates biofilm formation. Acts as a cytolytic peptide toxin that directly damages host epithelial membranes, triggers a danger response signaling pathway and activates epithelial immunity. Probably acts similarly to cationic antimicrobial peptide toxins, inducing lesions after binding to target cell membranes and causing an inward current associated with calcium influx. This chain is Extent of cell elongation protein 1, found in Candida tropicalis (strain ATCC MYA-3404 / T1) (Yeast).